The sequence spans 158 residues: Hypoxanthine DNA glycosylase (158 aa).

Asn39 is an active-site residue.

It belongs to the uracil-DNA glycosylase (UDG) superfamily. Type 6 (HDG) family.

Its function is as follows. Excises hypoxanthine, a deamination product of adenine, from double-stranded DNA. Acts on double-stranded DNA containing G/I, T/I, A/I and C/I base pairs, but not on single-stranded inosine-containing DNA. Also has minor xanthine DNA glycosylase activity. Lacks any detectable uracil-DNA glycosylase activity. The sequence is that of Hypoxanthine DNA glycosylase from Methanosarcina barkeri (strain Fusaro / DSM 804).